The sequence spans 201 residues: Recombination protein RecR (201 aa).

The C4-type zinc-finger motif lies at 57 to 72 (CADCRTFTEQEVCNIC). The Toprim domain maps to 81-176 (GQICVVESPA…EASRIAHGVP (96 aa)).

Belongs to the RecR family.

Its function is as follows. May play a role in DNA repair. It seems to be involved in an RecBC-independent recombinational process of DNA repair. It may act with RecF and RecO. The protein is Recombination protein RecR of Shigella boydii serotype 18 (strain CDC 3083-94 / BS512).